The primary structure comprises 392 residues: MKRAILIVLDGVGIGELPDAAKYNDEGSNTLVNTAKALGGLSLPNMGKMGLSNIEEIPGTPKEDNPIAFYGKMAEASPGKDSTTGHWEIAGLILDRPFPVYPNGFPKEVIEAFEKAIGRKVIGNKPASGTEIIKELGEYHMKTGYPIVYTSADSVFQIAAHEEVIPVEELYRMCEIARNILQGEHAVARVIARPFTGSPGNFYRTPRRKDFSLPPFKATLLDYLKENNYDVIGVGKIEDLFAGRGLTLSLHQDNNSEGIKNIFEAWNKLREGLIFVNLVDFDMLYGHRNDPEGMGKALKDFDDALPDIMKLLSDFDLLIITADHGNDPTTPSTDHSREYVPLLIYSPNFKRTFPLGIRSTFSDLGKTLADFFNVKNDLHGESFLSTIEEGWK.

Mn(2+) is bound by residues aspartate 10, aspartate 282, histidine 287, aspartate 323, histidine 324, and histidine 335.

It belongs to the phosphopentomutase family. Requires Mn(2+) as cofactor.

Its subcellular location is the cytoplasm. The catalysed reaction is 2-deoxy-alpha-D-ribose 1-phosphate = 2-deoxy-D-ribose 5-phosphate. It catalyses the reaction alpha-D-ribose 1-phosphate = D-ribose 5-phosphate. It functions in the pathway carbohydrate degradation; 2-deoxy-D-ribose 1-phosphate degradation; D-glyceraldehyde 3-phosphate and acetaldehyde from 2-deoxy-alpha-D-ribose 1-phosphate: step 1/2. Isomerase that catalyzes the conversion of deoxy-ribose 1-phosphate (dRib-1-P) and ribose 1-phosphate (Rib-1-P) to deoxy-ribose 5-phosphate (dRib-5-P) and ribose 5-phosphate (Rib-5-P), respectively. This Dictyoglomus thermophilum (strain ATCC 35947 / DSM 3960 / H-6-12) protein is Phosphopentomutase.